A 286-amino-acid chain; its full sequence is Nucleotide-binding protein VC_2532 (286 aa).

Position 8–15 (8–15 (GQSGAGKS)) interacts with ATP. 56–59 (DIRN) contacts GTP.

It belongs to the RapZ-like family.

In terms of biological role, displays ATPase and GTPase activities. The polypeptide is Nucleotide-binding protein VC_2532 (Vibrio cholerae serotype O1 (strain ATCC 39315 / El Tor Inaba N16961)).